Here is a 398-residue protein sequence, read N- to C-terminus: MKKKFLKGLCCAFVISITCLGASSKAYGWDGKKDGTGTHSMIVTQAVKVLENDMSKDEPEIVKQNFKILQDNMHKFQLGSTYPDYDPNAYKLFQDHFWDPDTDHNFSKDNLWYLSYSIKDTAESQVRKFTALARNEWEKGNYEKATWYFGQAMHYFGDLNTPYHAANVTAVDSIGHTKYEGFAEKRKDQYRINTTGIKTNEGFYADALKNSNFDSWSKEYCKGWAKQAKNLYYSHSTMKHTNEDWDYSASHALKNAQMGTAGCIYRFLYDVSKDLLPTENHKINGLMVVIKTANEIAAGTDDYVYFGIERKDGTVQEWTLDNPGNDFEANQEDTYILKIKKPSIKFSDINRMWIRKANFTPVSDDWKVKGIKVIADGSVQYEKQINKWIHGNEKYYIN.

An N-terminal signal peptide occupies residues 1–28 (MKKKFLKGLCCAFVISITCLGASSKAYG). Zn(2+) is bound by residues Trp-29, His-39, Asp-84, His-96, His-154, Asp-158, His-164, His-176, and Glu-180. The Zn-dependent PLC domain maps to 29–278 (WDGKKDGTGT…YDVSKDLLPT (250 aa)). The interval 275-283 (LLPTENHKI) is linker. The PLAT domain maps to 284-398 (NGLMVVIKTA…IHGNEKYYIN (115 aa)). Residues Gly-299, Thr-300, Asp-301, Asp-321, Asn-322, Gly-324, Asn-325, Asp-326, and Asp-364 each contribute to the Ca(2+) site.

It belongs to the bacterial zinc-metallophospholipase C family. Ca(2+) is required as a cofactor. It depends on Zn(2+) as a cofactor.

The protein resides in the secreted. It carries out the reaction a 1,2-diacyl-sn-glycero-3-phosphocholine + H2O = phosphocholine + a 1,2-diacyl-sn-glycerol + H(+). Its function is as follows. Bacterial hemolysins are exotoxins that attack blood cell membranes and cause cell rupture. Binds to eukaryotic membranes where it hydrolyzes phosphatidylcholine, sphingomyelin and phosphatidylethanolamine. The diacylglycerol produced can activate both the arachidonic acid pathway, leading to modulation of the inflammatory response cascade and thrombosis, and protein kinase C, leading to activation of eukaryotic phospholipases and further membrane damage. This enzyme is hemolytic against horse erythrocytes. This is Phospholipase C (plc) from Clostridium novyi.